The chain runs to 69 residues: Antimicrobial peptide Eval36 (69 aa).

An N-terminal signal peptide occupies residues 1–23; the sequence is MKAQFAILVISMMLLQLIVQTES. Position 37 is a leucine amide (leucine 37). Residues 38–69 constitute a propeptide that is removed on maturation; sequence GKRGLRNLDDFQDFLDSDTSDADLRMLRDMFR.

It belongs to the non-disulfide-bridged peptide (NDBP) superfamily. Short antimicrobial peptide (group 4) family. Expressed by the venom gland.

The protein resides in the secreted. Its function is as follows. Probable antimicrobial peptide. Shows low inhibitory activity against herpes simplex virus type 1 (HSV-1). This is Antimicrobial peptide Eval36 from Euscorpiops validus (Scorpion).